The sequence spans 191 residues: uncharacterized protein (191 aa).

The next 6 helical transmembrane spans lie at 4 to 24 (IYRQTIHLVFGVLIAFSVLIF), 26 to 46 (KQLIIPLIVSIVIGICLYFLC), 68 to 88 (GKGAIYFAIGMLISLILIDDI), 90 to 110 (AVFFGILVFAVGDSLATIIGI), 135 to 155 (LILYPFYGTYGIFVALISAFI), and 168 to 188 (LYLPFIVAFIINHQINICSLM).

Its subcellular location is the cell membrane. This is an uncharacterized protein from Methanocaldococcus jannaschii (strain ATCC 43067 / DSM 2661 / JAL-1 / JCM 10045 / NBRC 100440) (Methanococcus jannaschii).